The chain runs to 485 residues: MLKDPKQVHAPNFGVVVSVRGSVVDIRFDESLPPIHRLLRVVGIFIVIEVLAQRDARVVRGIALTPTQGLARGMRVEDSGGPLTAPVGKAIISRMFDVFGNTIDNGPLLNNVQWRSVHRAPPTLSQRSTQSEIFVTGIKVIDVLVPLERGGKAGLFGGAGVGKTVLLTEMIHNMVSHHNGISIFCGIGERSREGEELYREMKEAGVLPNMVMIFGQMNEPPGARFRVGHAALTMAEYFRDDESRDVLLLIDNIFRFIQAGSEISGLMGQMPSRLGYQPTMGSELSSLEERIANTEDGAITSIQAVYVPADDFTDPAAVHTFSHLSASIVLSRQRASEGLYPSIDPLQSSSKMATAGIIGERHYNLAQEVRRTLAKYDDLKDIIAMLGLEQLNVDDRKLVGRARRLERFFTQPFFSTEQFSTMEGKLVSLDDALDGCERILADEFADYPESALYMIGAVDEVKINNKAAQHTKQQKEKNNGSTDVN.

157 to 164 (GGAGVGKT) contacts ATP.

This sequence belongs to the ATPase alpha/beta chains family. As to quaternary structure, F-type ATPases have 2 components, CF(1) - the catalytic core - and CF(0) - the membrane proton channel. CF(1) has five subunits: alpha(3), beta(3), gamma(1), delta(1), epsilon(1). CF(0) has three main subunits: a(1), b(2) and c(9-12). The alpha and beta chains form an alternating ring which encloses part of the gamma chain. CF(1) is attached to CF(0) by a central stalk formed by the gamma and epsilon chains, while a peripheral stalk is formed by the delta and b chains.

The protein localises to the cell inner membrane. The catalysed reaction is ATP + H2O + 4 H(+)(in) = ADP + phosphate + 5 H(+)(out). Produces ATP from ADP in the presence of a proton gradient across the membrane. The catalytic sites are hosted primarily by the beta subunits. This chain is ATP synthase subunit beta 1, found in Psychromonas ingrahamii (strain DSM 17664 / CCUG 51855 / 37).